Reading from the N-terminus, the 499-residue chain is Lysine--tRNA ligase (499 aa).

Residues E408 and E415 each contribute to the Mg(2+) site.

This sequence belongs to the class-II aminoacyl-tRNA synthetase family. As to quaternary structure, homodimer. Mg(2+) serves as cofactor.

It is found in the cytoplasm. It carries out the reaction tRNA(Lys) + L-lysine + ATP = L-lysyl-tRNA(Lys) + AMP + diphosphate. The chain is Lysine--tRNA ligase from Bacillus thuringiensis (strain Al Hakam).